Reading from the N-terminus, the 573-residue chain is Protein FAM227B (573 aa).

Residues 429 to 485 are a coiled coil; that stretch reads DNKKDFKRVKQRIKDDIKFLKEQQEQIDKELDRLQAKASKNLQEVKNDFENFLHKLR. Residues 497–521 show a composition bias toward low complexity; that stretch reads SASPSESLQSLQSPNSSLSSPAMSE. Positions 497–528 are disordered; that stretch reads SASPSESLQSLQSPNSSLSSPAMSEDFNSVEE.

The protein belongs to the FAM227 family.

In Rattus norvegicus (Rat), this protein is Protein FAM227B (Fam227b).